The sequence spans 517 residues: GMP synthase [glutamine-hydrolyzing] (517 aa).

A Glutamine amidotransferase type-1 domain is found at Lys-11–Asn-202. Catalysis depends on Cys-88, which acts as the Nucleophile. Residues His-176 and Glu-178 contribute to the active site. The region spanning Trp-203–Arg-392 is the GMPS ATP-PPase domain. An ATP-binding site is contributed by Ser-230–Ser-236.

Homodimer.

It catalyses the reaction XMP + L-glutamine + ATP + H2O = GMP + L-glutamate + AMP + diphosphate + 2 H(+). The protein operates within purine metabolism; GMP biosynthesis; GMP from XMP (L-Gln route): step 1/1. Catalyzes the synthesis of GMP from XMP. The sequence is that of GMP synthase [glutamine-hydrolyzing] from Pediococcus pentosaceus (strain ATCC 25745 / CCUG 21536 / LMG 10740 / 183-1w).